Here is an 83-residue protein sequence, read N- to C-terminus: Small ribosomal subunit protein eS21 (83 aa).

It belongs to the eukaryotic ribosomal protein eS21 family. In terms of assembly, component of the 40S small ribosomal subunit.

The protein resides in the cytoplasm. It localises to the cytosol. It is found in the rough endoplasmic reticulum. This is Small ribosomal subunit protein eS21 (RpS21) from Ixodes scapularis (Black-legged tick).